A 541-amino-acid polypeptide reads, in one-letter code: Zinc finger protein 513 (541 aa).

The tract at residues 1 to 118 (MPRRKQSHPQ…GEARGERPGP (118 aa)) is disordered. A compositionally biased stretch (acidic residues) spans 44–55 (LEFEEEEEEDEG). Residues serine 85 and serine 96 each carry the phosphoserine modification. Over residues 103–115 (EPARGPGEARGER) the composition is skewed to basic and acidic residues. C2H2-type zinc fingers lie at residues 150-172 (YSCR…MQTH), 178-200 (FRCG…TRTH), 206-228 (YRCP…QRTH), 360-382 (FACS…MKTH), 388-410 (FRCA…QRVH), 416-438 (YKCP…GRIH), 444-466 (FRCS…MLRH), and 472-494 (FRCA…QKVH). The tract at residues 492–541 (KVHGHGGAGGPGLSAPEGWAPPHSPPSVLSTRGPAALGATGSRALHSDSP) is disordered.

Belongs to the krueppel C2H2-type zinc-finger protein family. In terms of assembly, binds DNA. Can associate with the proximal promoter regions of PAX6 and SP4, and their known targets including ARR3, RHO, OPN1MW2 and OPN1SW. As to expression, widely expressed. In the eye, expression is greatest in the retina and least in the lens and cornea.

The protein localises to the nucleus. Its function is as follows. Transcriptional regulator that plays a role in retinal development and maintenance. This Mus musculus (Mouse) protein is Zinc finger protein 513 (Znf513).